A 338-amino-acid chain; its full sequence is Selenocysteine methyltransferase (338 aa).

A Hcy-binding domain is found at 1 to 327; that stretch reads MSSPLITDFL…DTIRGIYKIL (327 aa). Positions 245, 312, and 313 each coordinate Zn(2+).

As to quaternary structure, monomer. The cofactor is Zn(2+). As to expression, present in all tissues tested.

It carries out the reaction S-methyl-L-methionine + L-selenocysteine = Se-methyl-L-selenocysteine + L-methionine + H(+). Catalyzes the methylation of selenocysteine with S-methylmethionine as donor. Does not methylate cysteine. In Astragalus bisulcatus (Two-grooved milkvetch), this protein is Selenocysteine methyltransferase (SMTA).